Consider the following 760-residue polypeptide: 5-methyltetrahydropteroyltriglutamate--homocysteine methyltransferase (760 aa).

5-methyltetrahydropteroyltri-L-glutamate-binding positions include 17 to 20 and Lys-118; that span reads RELK. Residues 436–438 and Glu-489 contribute to the L-homocysteine site; that span reads IGS. L-methionine is bound by residues 436–438 and Glu-489; that span reads IGS. 5-methyltetrahydropteroyltri-L-glutamate is bound by residues 520 to 521 and Trp-566; that span reads RC. Asp-604 is a binding site for L-homocysteine. Asp-604 serves as a coordination point for L-methionine. Glu-610 is a binding site for 5-methyltetrahydropteroyltri-L-glutamate. Residues His-646, Cys-648, and Glu-670 each coordinate Zn(2+). Residue His-699 is the Proton donor of the active site. Residue Cys-731 coordinates Zn(2+).

The protein belongs to the vitamin-B12 independent methionine synthase family. Zn(2+) is required as a cofactor.

It catalyses the reaction 5-methyltetrahydropteroyltri-L-glutamate + L-homocysteine = tetrahydropteroyltri-L-glutamate + L-methionine. Its pathway is amino-acid biosynthesis; L-methionine biosynthesis via de novo pathway; L-methionine from L-homocysteine (MetE route): step 1/1. Its function is as follows. Catalyzes the transfer of a methyl group from 5-methyltetrahydrofolate to homocysteine resulting in methionine formation. The sequence is that of 5-methyltetrahydropteroyltriglutamate--homocysteine methyltransferase from Vibrio parahaemolyticus serotype O3:K6 (strain RIMD 2210633).